A 360-amino-acid chain; its full sequence is Protein phosphatase 1L (360 aa).

The Extracellular segment spans residues 1 to 25 (MIEDTMTLLSLLGRIMRYFLLRPET). A helical membrane pass occupies residues 26–42 (LFLLCISLALWSYFFHT). At 43-360 (DEVKTIVKSS…FRNSSKTEEH (318 aa)) the chain is on the cytoplasmic side. Residues 92–351 (NVAVYSIQGR…DNITVMVVKF (260 aa)) form the PPM-type phosphatase domain. Mn(2+) is bound by residues aspartate 128, glycine 129, aspartate 302, and aspartate 342.

It belongs to the PP2C family. Interacts with MAP3K7/TAK1 and MAP3K5. It depends on Mg(2+) as a cofactor. The cofactor is Mn(2+). Expressed in brain, heart, testis, liver, lung and skeletal muscle.

It localises to the membrane. The enzyme catalyses O-phospho-L-seryl-[protein] + H2O = L-seryl-[protein] + phosphate. The catalysed reaction is O-phospho-L-threonyl-[protein] + H2O = L-threonyl-[protein] + phosphate. Its function is as follows. Acts as a suppressor of the SAPK signaling pathways by associating with and dephosphorylating MAP3K7/TAK1 and MAP3K5, and by attenuating the association between MAP3K7/TAK1 and MAP2K4 or MAP2K6. The chain is Protein phosphatase 1L (Ppm1l) from Mus musculus (Mouse).